The primary structure comprises 718 residues: MANKKCPVMHGGATEISMSNMEWWPKALNLDILHQHDSKTNPMGAGFNYREQVKLLDVEALKKDLHALMTDSQPWWPADWGHYGGLMIRLSWHAAGTYRTADGRGGAGRGNQRFAPLNSWPDNVNLDKARRLLWPLKKKYGNKLSWADLIAYAGTIAYESMGLKTFGFAFGREDIWHPEKDIYWGAEKEWLAPSGSEGSRYSGERDLENPLASVMMGLIYVNPEGVDGHPDPLKTANDVRVTFERMAMNDEETVALTAGGHTVGKCHGNGDAELLGPVPEGADVEDQGLGWINKSQRGIGRDTVSSGLEGAWTTHPTQWDNGYFTLLLNHEWQLNKSPAGAWQWEPINIKEEDKPVDVEDLTQRYNPIMTDADMAMKLDPDYQIISARFDKDPEYFSDVFARTWFKLTHRDMGPKTRYIGPDVPAVDLLWQDPVPKGRSDYDVEAVKAQIAASSLSVSDMVTTAWDSARTFRGSDLRGGANGARIRLAPQRDWQANEPERLNRVLAVLEPIAAKSGVSVADVIVLAGNLAVEQAAKAAGFAIKVPFSPGRGDATADMTDVESFHVLEPLHDGYRNWLKKDYAVSAEELMLDQTQLLGLTAQEMTVLLGGMRVLGTNYNGESHGAFTEHQGALTNDFFVNLTDMNNTWQPVSNNLYEISDRETAKLKWTATRVDLVFGSNSILRAYAEVYAQDDNQQKFVEDFVTTWAKVMNSDRFDLD.

The segment at residues 92 to 220 is a cross-link (tryptophyl-tyrosyl-methioninium (Trp-Tyr) (with M-246)); the sequence is WHAAGTYRTA…LASVMMGLIY (129 aa). Catalysis depends on His93, which acts as the Proton acceptor. Positions 220-246 form a cross-link, tryptophyl-tyrosyl-methioninium (Tyr-Met) (with W-92); sequence YVNPEGVDGHPDPLKTANDVRVTFERM. Heme b is bound at residue His261.

It belongs to the peroxidase family. Peroxidase/catalase subfamily. In terms of assembly, homodimer or homotetramer. Heme b is required as a cofactor. In terms of processing, formation of the three residue Trp-Tyr-Met cross-link is important for the catalase, but not the peroxidase activity of the enzyme.

It carries out the reaction H2O2 + AH2 = A + 2 H2O. The catalysed reaction is 2 H2O2 = O2 + 2 H2O. Bifunctional enzyme with both catalase and broad-spectrum peroxidase activity. This Shewanella halifaxensis (strain HAW-EB4) protein is Catalase-peroxidase.